Here is a 105-residue protein sequence, read N- to C-terminus: ATP synthase subunit c (105 aa).

2 consecutive transmembrane segments (helical) span residues 37-57 (IGAG…GYIF) and 82-102 (SAIS…LIFV).

This sequence belongs to the ATPase C chain family. In terms of assembly, F-type ATPases have 2 components, F(1) - the catalytic core - and F(0) - the membrane proton channel. F(1) has five subunits: alpha(3), beta(3), gamma(1), delta(1), epsilon(1). F(0) has three main subunits: a(1), b(2) and c(10-14). The alpha and beta chains form an alternating ring which encloses part of the gamma chain. F(1) is attached to F(0) by a central stalk formed by the gamma and epsilon chains, while a peripheral stalk is formed by the delta and b chains.

The protein localises to the cell membrane. In terms of biological role, f(1)F(0) ATP synthase produces ATP from ADP in the presence of a proton or sodium gradient. F-type ATPases consist of two structural domains, F(1) containing the extramembraneous catalytic core and F(0) containing the membrane proton channel, linked together by a central stalk and a peripheral stalk. During catalysis, ATP synthesis in the catalytic domain of F(1) is coupled via a rotary mechanism of the central stalk subunits to proton translocation. Functionally, key component of the F(0) channel; it plays a direct role in translocation across the membrane. A homomeric c-ring of between 10-14 subunits forms the central stalk rotor element with the F(1) delta and epsilon subunits. The polypeptide is ATP synthase subunit c (Mycoplasma pneumoniae (strain ATCC 29342 / M129 / Subtype 1) (Mycoplasmoides pneumoniae)).